The sequence spans 275 residues: D-apionate oxidoisomerase (275 aa).

NAD(+) contacts are provided by residues 11–13 (GKM), glutamate 32, and aspartate 68. 2 residues coordinate Zn(2+): histidine 113 and glutamate 183.

This sequence belongs to the ApnO family. The cofactor is Zn(2+).

The enzyme catalyses D-apionate + NAD(+) = 3-oxoisoapionate + NADH + H(+). It participates in carbohydrate metabolism. In terms of biological role, involved in catabolism of D-apiose. Catalyzes the conversion of D-apionate to 3-oxo-isoapionate. The sequence is that of D-apionate oxidoisomerase from Rhizobium rhizogenes (strain K84 / ATCC BAA-868) (Agrobacterium radiobacter).